Reading from the N-terminus, the 526-residue chain is MKQQVIIFDTTLRDGEQALQASLSVKEKLQIALALERMGVDVMEVGFPISSPGDFASVRAIAQRVKQSRVCALARCVDADIDAAAEALRAADAFRIHTFLATSTLHLESKLRRSFDDAIAMARHAILRARRYTDDVEFSCEDAGRTPIDNLCRIVEAAIDAGAKTVNIPDTVGYTTPYQFGGIIHTLFERVPNIDKAVISVHCHDDLGMACANSISAIQSGARQVEGTLNGIGERAGNCALEEVIMAIRTRQDLLRVHTGIRHQEIYRTSQLVSQLCNMPIPANKAVVGANAFAHSSGIHQDGVLKNRENYEIMTPESIGLPQTQLNLTSRSGRAAVKHRMEEMGYCEGNDFDLERLYQAFLRLADKKGQVFDYDLEALAFIDRQQEEADHFRLEYFSVQSGSSVMATASVRLICGAETRAEAATGNGPVDAVYQAISRITDISVDIVKYQLSAKGQGRDALGQVDIVAEHQGRRFHGVGLTTDIVESSAQALIHVLNHIWRARQVEQERQRLHSPVPSISTSSTH.

The Pyruvate carboxyltransferase domain occupies 5–267; that stretch reads VIIFDTTLRD…HTGIRHQEIY (263 aa). Mn(2+)-binding residues include Asp-14, His-202, His-204, and Asn-238. The interval 393-526 is regulatory domain; it reads RLEYFSVQSG…VPSISTSSTH (134 aa).

Belongs to the alpha-IPM synthase/homocitrate synthase family. LeuA type 1 subfamily. In terms of assembly, homodimer. Requires Mn(2+) as cofactor.

It localises to the cytoplasm. The catalysed reaction is 3-methyl-2-oxobutanoate + acetyl-CoA + H2O = (2S)-2-isopropylmalate + CoA + H(+). Its pathway is amino-acid biosynthesis; L-leucine biosynthesis; L-leucine from 3-methyl-2-oxobutanoate: step 1/4. Catalyzes the condensation of the acetyl group of acetyl-CoA with 3-methyl-2-oxobutanoate (2-ketoisovalerate) to form 3-carboxy-3-hydroxy-4-methylpentanoate (2-isopropylmalate). This is 2-isopropylmalate synthase from Edwardsiella ictaluri (strain 93-146).